A 274-amino-acid polypeptide reads, in one-letter code: Diaminopimelate epimerase (274 aa).

Positions 11, 44, and 64 each coordinate substrate. The active-site Proton donor is Cys73. Substrate is bound by residues Gly74 to Asn75, Asn157, Asn190, and Glu208 to Arg209. Residue Cys217 is the Proton acceptor of the active site. Substrate is bound at residue Gly218–Thr219.

The protein belongs to the diaminopimelate epimerase family. In terms of assembly, homodimer.

It is found in the cytoplasm. The enzyme catalyses (2S,6S)-2,6-diaminopimelate = meso-2,6-diaminopimelate. It functions in the pathway amino-acid biosynthesis; L-lysine biosynthesis via DAP pathway; DL-2,6-diaminopimelate from LL-2,6-diaminopimelate: step 1/1. Catalyzes the stereoinversion of LL-2,6-diaminopimelate (L,L-DAP) to meso-diaminopimelate (meso-DAP), a precursor of L-lysine and an essential component of the bacterial peptidoglycan. This is Diaminopimelate epimerase from Blochmanniella pennsylvanica (strain BPEN).